A 228-amino-acid polypeptide reads, in one-letter code: MDNNFKIKDLPKNERPQERLIRYGAEVLSNSELLAVILRTGTKNQNIMMLASSLIKETGGLDQLFNQSIEELTKIKGIGVTKAVQILALSELSKRFKTYKSGNEYKISTPLDVSNLVMEDMKYLKQEKLKILILNTKNIVTYIRDVFIGTLNSSIVHPREIFCEAIKKNGASIIICHNHPSGDPTPSKEDINITLRLKKCGKLIGIDLLDHIIIGENKYVSMKEKGTI.

Residues 106-228 (KISTPLDVSN…YVSMKEKGTI (123 aa)) form the MPN domain. The Zn(2+) site is built by His177, His179, and Asp190. Residues 177–190 (HNHPSGDPTPSKED) carry the JAMM motif motif.

It belongs to the UPF0758 family.

The chain is UPF0758 protein CLK_2387 from Clostridium botulinum (strain Loch Maree / Type A3).